We begin with the raw amino-acid sequence, 303 residues long: Epimerase family protein YfhF (303 aa).

This sequence belongs to the NAD(P)-dependent epimerase/dehydratase family. SDR39U1 subfamily.

This chain is Epimerase family protein YfhF (yfhF), found in Bacillus subtilis (strain 168).